The sequence spans 460 residues: Cation efflux system protein CusC (460 aa).

The signal sequence occupies residues Met1–Gly17. A lipid anchor (N-palmitoyl cysteine) is attached at Cys18. Cys18 carries S-diacylglycerol cysteine lipidation.

This sequence belongs to the outer membrane factor (OMF) (TC 1.B.17) family. In terms of assembly, homotrimer. Component of the cus efflux system composed of CusA, CusB, CusC and CusF.

It localises to the cell outer membrane. Functionally, forms pores that allow passive diffusion of cations across the outer membrane. Part of a cation efflux system that mediates resistance to copper and silver. In Escherichia coli O157:H7, this protein is Cation efflux system protein CusC (cusC).